The chain runs to 500 residues: Metal transporter Nramp3.1 (500 aa).

12 helical membrane-spanning segments follow: residues 51–71, 79–99, 128–148, 160–180, 188–208, 234–254, 280–300, 322–342, 370–390, 401–421, 439–459, and 467–487; these read LWLF…PGNL, AIAG…GLLV, MILW…EVIG, VLPL…FLFL, LEAA…WMFA, AVGV…SALV, AALA…AKGF, YGGG…AAGQ, ALIT…VFDT, WLNM…LCLV, VSWL…LDFF, and VFTT…IYLI.

This sequence belongs to the NRAMP (TC 2.A.55) family. As to expression, expressed in roots, stems, buds and leaves.

The protein resides in the golgi apparatus. The protein localises to the trans-Golgi network membrane. The catalysed reaction is Mn(2+)(in) = Mn(2+)(out). It catalyses the reaction Fe(2+)(in) = Fe(2+)(out). In terms of biological role, divalent metal transporter. Can transport manganese (Mn) and iron (Fe). Involved in the control of cell-to-cell transport of manganese (Mn) between organs and tissues to monitor Mn homeostasis. The polypeptide is Metal transporter Nramp3.1 (Populus trichocarpa (Western balsam poplar)).